A 156-amino-acid polypeptide reads, in one-letter code: ATP synthase subunit b (156 aa).

The chain crosses the membrane as a helical span at residues 7 to 29 (LLGQAISFGMFVWFCMKYVWPPI).

This sequence belongs to the ATPase B chain family. As to quaternary structure, F-type ATPases have 2 components, F(1) - the catalytic core - and F(0) - the membrane proton channel. F(1) has five subunits: alpha(3), beta(3), gamma(1), delta(1), epsilon(1). F(0) has three main subunits: a(1), b(2) and c(10-14). The alpha and beta chains form an alternating ring which encloses part of the gamma chain. F(1) is attached to F(0) by a central stalk formed by the gamma and epsilon chains, while a peripheral stalk is formed by the delta and b chains.

It is found in the cell inner membrane. Functionally, f(1)F(0) ATP synthase produces ATP from ADP in the presence of a proton or sodium gradient. F-type ATPases consist of two structural domains, F(1) containing the extramembraneous catalytic core and F(0) containing the membrane proton channel, linked together by a central stalk and a peripheral stalk. During catalysis, ATP synthesis in the catalytic domain of F(1) is coupled via a rotary mechanism of the central stalk subunits to proton translocation. Its function is as follows. Component of the F(0) channel, it forms part of the peripheral stalk, linking F(1) to F(0). The protein is ATP synthase subunit b of Vibrio cholerae serotype O1 (strain ATCC 39541 / Classical Ogawa 395 / O395).